A 123-amino-acid polypeptide reads, in one-letter code: Ribosome-binding factor A (123 aa).

Belongs to the RbfA family. As to quaternary structure, monomer. Binds 30S ribosomal subunits, but not 50S ribosomal subunits or 70S ribosomes.

It is found in the cytoplasm. One of several proteins that assist in the late maturation steps of the functional core of the 30S ribosomal subunit. Associates with free 30S ribosomal subunits (but not with 30S subunits that are part of 70S ribosomes or polysomes). Required for efficient processing of 16S rRNA. May interact with the 5'-terminal helix region of 16S rRNA. The chain is Ribosome-binding factor A from Chlamydia trachomatis serovar L2 (strain ATCC VR-902B / DSM 19102 / 434/Bu).